The following is a 290-amino-acid chain: MASLKELKDRIGSVKSTQKITKAKQMVAAAKLRRAQANAEAARPYAERLADVMASLAGKVSGDSAPRLLAGSGNDQKHLLVVVNTDKGLCGGLNSNIVKEAKAQAKKLIAAGKDVQFYLVGKKGRAPIKRDYEKQIAKHFDTSTVKQPGFEEADAIANELIDMFEAGEFDVAHLVYPTFKSALVQDPTTNQLIPVPSPEGEGTGGDAVVEYEPGEEEILEELLPRYVKTQLFGALLEREASEQGASMTAMDNATRNAGDLINKLTIQYNRSRQAAITTELIEIIAGAEAL.

Belongs to the ATPase gamma chain family. In terms of assembly, F-type ATPases have 2 components, CF(1) - the catalytic core - and CF(0) - the membrane proton channel. CF(1) has five subunits: alpha(3), beta(3), gamma(1), delta(1), epsilon(1). CF(0) has three main subunits: a, b and c.

The protein localises to the cell inner membrane. Its function is as follows. Produces ATP from ADP in the presence of a proton gradient across the membrane. The gamma chain is believed to be important in regulating ATPase activity and the flow of protons through the CF(0) complex. In Erythrobacter litoralis (strain HTCC2594), this protein is ATP synthase gamma chain.